A 412-amino-acid chain; its full sequence is Acyl-[acyl-carrier-protein] hydrolase FATB3, chloroplastic (412 aa).

The segment covering 1 to 25 has biased composition (low complexity); that stretch reads MVAAAASSAFFSFPTPGTSPKPGKF. The N-terminal 50 residues, 1-50, are a transit peptide targeting the chloroplast; it reads MVAAAASSAFFSFPTPGTSPKPGKFGNWPSSLSIPFNPKSNHNGGIQVKA. The interval 1–63 is disordered; that stretch reads MVAAAASSAF…AHPKANGSAV (63 aa). A compositionally biased stretch (polar residues) spans 28 to 44; sequence WPSSLSIPFNPKSNHNG. Residues Asn-310, His-312, and Cys-347 contribute to the active site. Residues 393 to 412 form a disordered region; it reads NAGATGAVSTGKTSNGNSVS. Positions 399–412 are enriched in polar residues; that stretch reads AVSTGKTSNGNSVS.

This sequence belongs to the acyl-ACP thioesterase family.

It localises to the plastid. It is found in the chloroplast. The enzyme catalyses tetradecanoyl-[ACP] + H2O = tetradecanoate + holo-[ACP] + H(+). Functionally, plays an essential role in chain termination during de novo fatty acid synthesis. Possesses thioesterase activity for medium chain acyl-ACPs. Main substrate is 14:0. This Cuphea viscosissima (Blue waxweed) protein is Acyl-[acyl-carrier-protein] hydrolase FATB3, chloroplastic.